A 472-amino-acid polypeptide reads, in one-letter code: MGSKVMMFKWSKNITPSQVIKLMRAEKDVEKSMAVFDSATAEYANGYVHDQSSFGYMVLRLVSANKFKAAEDLIVRMKIENCVVSEDILLSICRGYGRVHRPFDSLRVFHKMKDFDCDPSQKAYVTVLAILVEENQLNLAFKFYKNMREIGLPPTVASLNVLIKALCRNDGTVDAGLKIFLEMPKRGCDPDSYTYGTLISGLCRFGRIDEAKKLFTEMVEKDCAPTVVTYTSLINGLCGSKNVDEAMRYLEEMKSKGIEPNVFTYSSLMDGLCKDGRSLQAMELFEMMMARGCRPNMVTYTTLITGLCKEQKIQEAVELLDRMNLQGLKPDAGLYGKVISGFCAISKFREAANFLDEMILGGITPNRLTWNIHVKTSNEVVRGLCANYPSRAFTLYLSMRSRGISVEVETLESLVKCLCKKGEFQKAVQLVDEIVTDGCIPSKGTWKLLIGHTLDKTIVGEASDTLLRDLDI.

11 PPR repeats span residues 50–84 (DQSS…NCVV), 85–119 (SEDI…DCDP), 120–154 (SQKA…GLPP), 155–190 (TVAS…GCDP), 191–225 (DSYT…DCAP), 226–260 (TVVT…GIEP), 261–295 (NVFT…GCRP), 296–330 (NMVT…GLKP), 331–365 (DAGL…GITP), 373–406 (HVKT…GISV), and 407–441 (EVET…GCIP).

Belongs to the PPR family. P subfamily.

The polypeptide is Pentatricopeptide repeat-containing protein At5g46100 (Arabidopsis thaliana (Mouse-ear cress)).